A 70-amino-acid polypeptide reads, in one-letter code: ATP synthase subunit c (70 aa).

2 helical membrane-spanning segments follow: residues 4–24 (IAAA…NGLI) and 45–65 (LMFI…VIAF).

It belongs to the ATPase C chain family. As to quaternary structure, F-type ATPases have 2 components, F(1) - the catalytic core - and F(0) - the membrane proton channel. F(1) has five subunits: alpha(3), beta(3), gamma(1), delta(1), epsilon(1). F(0) has three main subunits: a(1), b(2) and c(10-14). The alpha and beta chains form an alternating ring which encloses part of the gamma chain. F(1) is attached to F(0) by a central stalk formed by the gamma and epsilon chains, while a peripheral stalk is formed by the delta and b chains.

It is found in the cell membrane. Functionally, f(1)F(0) ATP synthase produces ATP from ADP in the presence of a proton or sodium gradient. F-type ATPases consist of two structural domains, F(1) containing the extramembraneous catalytic core and F(0) containing the membrane proton channel, linked together by a central stalk and a peripheral stalk. During catalysis, ATP synthesis in the catalytic domain of F(1) is coupled via a rotary mechanism of the central stalk subunits to proton translocation. Key component of the F(0) channel; it plays a direct role in translocation across the membrane. A homomeric c-ring of between 10-14 subunits forms the central stalk rotor element with the F(1) delta and epsilon subunits. This chain is ATP synthase subunit c, found in Bacillus licheniformis (strain ATCC 14580 / DSM 13 / JCM 2505 / CCUG 7422 / NBRC 12200 / NCIMB 9375 / NCTC 10341 / NRRL NRS-1264 / Gibson 46).